A 309-amino-acid chain; its full sequence is NADH-cytochrome b5 reductase 1 (309 aa).

The chain crosses the membrane as a helical span at residues 31–51 (DWVVYSVALALALGTWKFFQL). The FAD-binding FR-type domain maps to 60–168 (TKFQEFELKE…RGPKGAFVYQ (109 aa)). FAD is bound by residues 148–163 (AGLS…GPKG) and 174–208 (HFGM…QVDL).

This sequence belongs to the flavoprotein pyridine nucleotide cytochrome reductase family. Monomer. Component of the 2-(3-amino-3-carboxypropyl)histidine synthase complex composed of DPH1, DPH2, DPH3 and a NADH-dependent reductase, predominantly CBR1. Requires FAD as cofactor.

The protein localises to the mitochondrion outer membrane. The catalysed reaction is 2 Fe(III)-[cytochrome b5] + NADH = 2 Fe(II)-[cytochrome b5] + NAD(+) + H(+). The enzyme catalyses 2 Fe(3+)-[Dph3] + NADH = 2 Fe(2+)-[Dph3] + NAD(+) + H(+). It functions in the pathway protein modification; peptidyl-diphthamide biosynthesis. Functionally, NADH-dependent reductase for DPH3 and cytochrome b5. Required for the first step of diphthamide biosynthesis, a post-translational modification of histidine which occurs in elongation factor 2. DPH1 and DPH2 transfer a 3-amino-3-carboxypropyl (ACP) group from S-adenosyl-L-methionine (SAM) to a histidine residue, the reaction is assisted by a reduction system comprising DPH3 and a NADH-dependent reductase, predominantly CBR1. By reducing DPH3, also involved in the formation of the tRNA wobble base modification mcm5s 2U (5-methoxycarbonylmethyl-2-thiouridine), mediated by the elongator complex. The cytochrome b5/NADH cytochrome b5 reductase electron transfer system supports the catalytic activity of several sterol biosynthetic enzymes. The polypeptide is NADH-cytochrome b5 reductase 1 (CBR1) (Pyricularia oryzae (strain 70-15 / ATCC MYA-4617 / FGSC 8958) (Rice blast fungus)).